Consider the following 116-residue polypeptide: Putative pterin-4-alpha-carbinolamine dehydratase 1 (116 aa).

This sequence belongs to the pterin-4-alpha-carbinolamine dehydratase family.

It carries out the reaction (4aS,6R)-4a-hydroxy-L-erythro-5,6,7,8-tetrahydrobiopterin = (6R)-L-erythro-6,7-dihydrobiopterin + H2O. The polypeptide is Putative pterin-4-alpha-carbinolamine dehydratase 1 (Cupriavidus pinatubonensis (strain JMP 134 / LMG 1197) (Cupriavidus necator (strain JMP 134))).